The sequence spans 260 residues: Large ribosomal subunit protein uL2 (260 aa).

The segment at 1–24 (MGRVIRAQRKGAGSVFKSHTHHRK) is disordered.

It belongs to the universal ribosomal protein uL2 family.

It localises to the cytoplasm. In Solanum lycopersicum (Tomato), this protein is Large ribosomal subunit protein uL2 (RPL8).